Reading from the N-terminus, the 237-residue chain is UPF0758 protein Veis_1654 (237 aa).

The 123-residue stretch at 115-237 (VFDTPDAVKH…ALSMAEMGLL (123 aa)) folds into the MPN domain. The Zn(2+) site is built by histidine 186, histidine 188, and aspartate 199. The JAMM motif motif lies at 186–199 (HNHPSGSVQPSRAD).

Belongs to the UPF0758 family.

This is UPF0758 protein Veis_1654 from Verminephrobacter eiseniae (strain EF01-2).